The chain runs to 469 residues: Probable ribonuclease FAU-1 (469 aa).

The protein belongs to the FAU-1 family.

In terms of biological role, probable RNase involved in rRNA stability through maturation and/or degradation of precursor rRNAs. Binds to RNA in loop regions with AU-rich sequences. The sequence is that of Probable ribonuclease FAU-1 from Pyrococcus abyssi (strain GE5 / Orsay).